A 125-amino-acid polypeptide reads, in one-letter code: Large ribosomal subunit protein bL12 (125 aa).

The protein belongs to the bacterial ribosomal protein bL12 family. In terms of assembly, homodimer. Part of the ribosomal stalk of the 50S ribosomal subunit. Forms a multimeric L10(L12)X complex, where L10 forms an elongated spine to which 2 to 4 L12 dimers bind in a sequential fashion. Binds GTP-bound translation factors.

Functionally, forms part of the ribosomal stalk which helps the ribosome interact with GTP-bound translation factors. Is thus essential for accurate translation. This Rickettsia felis (strain ATCC VR-1525 / URRWXCal2) (Rickettsia azadi) protein is Large ribosomal subunit protein bL12.